Consider the following 134-residue polypeptide: MADTFLLKIVTPDKDIFNGNIKRIFLRNSVGRLEILANHANMVTSTVSSIVEFTDAEGKDRKLFVSKGIASIFNNEMTIFSESAEFSDNIDLNRAEKAKERAEKRLLEGNKYDKERAELALLRSIERINLKKMN.

It belongs to the ATPase epsilon chain family. As to quaternary structure, F-type ATPases have 2 components, CF(1) - the catalytic core - and CF(0) - the membrane proton channel. CF(1) has five subunits: alpha(3), beta(3), gamma(1), delta(1), epsilon(1). CF(0) has three main subunits: a, b and c.

Its subcellular location is the cell membrane. Its function is as follows. Produces ATP from ADP in the presence of a proton gradient across the membrane. This is ATP synthase epsilon chain from Clostridium botulinum (strain Alaska E43 / Type E3).